A 343-amino-acid chain; its full sequence is Histone H1.8 (343 aa).

Low complexity predominate over residues 1–32 (MAPGSIASSDTSSSTSSSSTSSASSASAEGSS). Disordered regions lie at residues 1–50 (MAPG…VRAP) and 122–343 (ATGS…EAEG). The H15 domain maps to 52 to 130 (RHPPVLRMVL…GATGSFKLVP (79 aa)). Residues 132–142 (DKRKIPPRKTA) show a composition bias toward basic residues. Basic and acidic residues-rich tracts occupy residues 150–183 (EGKD…ERAA), 199–219 (QTKD…RPDK), and 235–247 (KVKE…ADTK). Residues 161 to 176 (KKDPANTVEVKKGSRK) carry the Nuclear localization signal motif. The segment covering 253 to 265 (QPGSQSSKSTVTK) has biased composition (polar residues).

This sequence belongs to the histone H1/H5 family. In terms of tissue distribution, oocyte (at protein level).

The protein localises to the cytoplasm. It localises to the nucleus. Its subcellular location is the chromosome. In terms of biological role, may play a key role in the control of gene expression during oogenesis and early embryogenesis, presumably through the perturbation of chromatin structure. Essential for meiotic maturation of germinal vesicle-stage oocytes. The somatic type linker histone H1c is rapidly replaced by H1oo in a donor nucleus transplanted into an oocyte. The greater mobility of H1oo as compared to H1c may contribute to this rapid replacement and increased instability of the embryonic chromatin structure. The rapid replacement of H1c with H1oo may play an important role in nuclear remodeling. The protein is Histone H1.8 of Bos taurus (Bovine).